A 356-amino-acid polypeptide reads, in one-letter code: Phosphoserine aminotransferase (356 aa).

R41 is an L-glutamate binding site. Pyridoxal 5'-phosphate is bound by residues 75-76 (AS), W99, T147, D166, and Q189. At K190 the chain carries N6-(pyridoxal phosphate)lysine. 231 to 232 (NT) is a pyridoxal 5'-phosphate binding site.

This sequence belongs to the class-V pyridoxal-phosphate-dependent aminotransferase family. SerC subfamily. As to quaternary structure, homodimer. Pyridoxal 5'-phosphate is required as a cofactor.

It is found in the cytoplasm. It catalyses the reaction O-phospho-L-serine + 2-oxoglutarate = 3-phosphooxypyruvate + L-glutamate. The enzyme catalyses 4-(phosphooxy)-L-threonine + 2-oxoglutarate = (R)-3-hydroxy-2-oxo-4-phosphooxybutanoate + L-glutamate. It participates in amino-acid biosynthesis; L-serine biosynthesis; L-serine from 3-phospho-D-glycerate: step 2/3. The protein operates within cofactor biosynthesis; pyridoxine 5'-phosphate biosynthesis; pyridoxine 5'-phosphate from D-erythrose 4-phosphate: step 3/5. Its function is as follows. Catalyzes the reversible conversion of 3-phosphohydroxypyruvate to phosphoserine and of 3-hydroxy-2-oxo-4-phosphonooxybutanoate to phosphohydroxythreonine. The chain is Phosphoserine aminotransferase from Phocaeicola vulgatus (strain ATCC 8482 / DSM 1447 / JCM 5826 / CCUG 4940 / NBRC 14291 / NCTC 11154) (Bacteroides vulgatus).